The sequence spans 161 residues: Large ribosomal subunit protein uL15 (161 aa).

A disordered region spans residues 1-50 (MKLSDIADNAGSRKKRMRIGRGIGSGKGKTGGRGGKGQTARSGVRINGFE). A compositionally biased stretch (gly residues) spans 21-37 (RGIGSGKGKTGGRGGKG).

This sequence belongs to the universal ribosomal protein uL15 family. In terms of assembly, part of the 50S ribosomal subunit.

Its function is as follows. Binds to the 23S rRNA. The chain is Large ribosomal subunit protein uL15 from Nitrobacter winogradskyi (strain ATCC 25391 / DSM 10237 / CIP 104748 / NCIMB 11846 / Nb-255).